A 256-amino-acid polypeptide reads, in one-letter code: D-aminoacyl-tRNA deacylase (256 aa).

This sequence belongs to the DtdA deacylase family. Monomer. Zn(2+) is required as a cofactor.

The enzyme catalyses a D-aminoacyl-tRNA + H2O = a tRNA + a D-alpha-amino acid + H(+). The catalysed reaction is glycyl-tRNA(Ala) + H2O = tRNA(Ala) + glycine + H(+). In terms of biological role, D-aminoacyl-tRNA deacylase with broad substrate specificity. By recycling D-aminoacyl-tRNA to D-amino acids and free tRNA molecules, this enzyme counteracts the toxicity associated with the formation of D-aminoacyl-tRNA entities in vivo. This chain is D-aminoacyl-tRNA deacylase, found in Thermoplasma volcanium (strain ATCC 51530 / DSM 4299 / JCM 9571 / NBRC 15438 / GSS1).